A 1409-amino-acid chain; its full sequence is DNA-directed RNA polymerase subunit beta' (1409 aa).

4 residues coordinate Zn(2+): cysteine 70, cysteine 72, cysteine 85, and cysteine 88. The Mg(2+) site is built by aspartate 460, aspartate 462, and aspartate 464. Cysteine 822, cysteine 896, cysteine 903, and cysteine 906 together coordinate Zn(2+).

It belongs to the RNA polymerase beta' chain family. In terms of assembly, the RNAP catalytic core consists of 2 alpha, 1 beta, 1 beta' and 1 omega subunit. When a sigma factor is associated with the core the holoenzyme is formed, which can initiate transcription. Mg(2+) is required as a cofactor. The cofactor is Zn(2+).

The enzyme catalyses RNA(n) + a ribonucleoside 5'-triphosphate = RNA(n+1) + diphosphate. Its function is as follows. DNA-dependent RNA polymerase catalyzes the transcription of DNA into RNA using the four ribonucleoside triphosphates as substrates. The protein is DNA-directed RNA polymerase subunit beta' of Methylobacillus flagellatus (strain ATCC 51484 / DSM 6875 / VKM B-1610 / KT).